The chain runs to 519 residues: Chloroethene reductive dehalogenase (519 aa).

A signal peptide (tat-type signal) is located at residues 1–43 (MSKFHKTISRRDFMKGLGLAGAGIGAVAASAPVFHDIDELVSS). 4Fe-4S ferredoxin-type domains follow at residues 388–420 (PTPP…QEDE) and 435–465 (LGYR…LENA). 8 residues coordinate [4Fe-4S] cluster: C400, C403, C406, C410, C444, C448, C451, and C455.

Belongs to the PceA family. It depends on [4Fe-4S] cluster as a cofactor. Corrinoid serves as cofactor. Predicted to be exported by the Tat system. The position of the signal peptide cleavage has been experimentally proven.

The protein resides in the cell membrane. It catalyses the reaction chloroethene + AH2 = ethene + chloride + A + H(+). The enzyme catalyses (Z)-1,2-dichloroethene + AH2 = chloroethene + chloride + A + H(+). The catalysed reaction is 1,1-dichloroethene + AH2 = chloroethene + chloride + A + H(+). Its function is as follows. Catalyzes the reductive dechlorination of chloroethene (or vinyl chloride, VC) to ethene. Can also reduce all dichloroethene (DCE) isomers, but not tetrachloroethene (PCE) or trichloroethene (TCE), at high rates. Reduced methyl viologen can act as the artificial electron donor. The sequence is that of Chloroethene reductive dehalogenase from Dehalococcoides mccartyi (strain VS).